The sequence spans 169 residues: Crossover junction endodeoxyribonuclease RuvC (169 aa).

Catalysis depends on residues D12, E72, and D144. 3 residues coordinate Mg(2+): D12, E72, and D144.

This sequence belongs to the RuvC family. In terms of assembly, homodimer which binds Holliday junction (HJ) DNA. The HJ becomes 2-fold symmetrical on binding to RuvC with unstacked arms; it has a different conformation from HJ DNA in complex with RuvA. In the full resolvosome a probable DNA-RuvA(4)-RuvB(12)-RuvC(2) complex forms which resolves the HJ. Mg(2+) is required as a cofactor.

The protein resides in the cytoplasm. It catalyses the reaction Endonucleolytic cleavage at a junction such as a reciprocal single-stranded crossover between two homologous DNA duplexes (Holliday junction).. Functionally, the RuvA-RuvB-RuvC complex processes Holliday junction (HJ) DNA during genetic recombination and DNA repair. Endonuclease that resolves HJ intermediates. Cleaves cruciform DNA by making single-stranded nicks across the HJ at symmetrical positions within the homologous arms, yielding a 5'-phosphate and a 3'-hydroxyl group; requires a central core of homology in the junction. The consensus cleavage sequence is 5'-(A/T)TT(C/G)-3'. Cleavage occurs on the 3'-side of the TT dinucleotide at the point of strand exchange. HJ branch migration catalyzed by RuvA-RuvB allows RuvC to scan DNA until it finds its consensus sequence, where it cleaves and resolves the cruciform DNA. In Xanthobacter autotrophicus (strain ATCC BAA-1158 / Py2), this protein is Crossover junction endodeoxyribonuclease RuvC.